A 323-amino-acid polypeptide reads, in one-letter code: Olfactory receptor 6T1 (323 aa).

At 1-25 (MNPENWTQVTSFVLLGFPSSHLIQF) the chain is on the extracellular side. Residue N5 is glycosylated (N-linked (GlcNAc...) asparagine). A helical membrane pass occupies residues 26-46 (LVFLGLMVTYIVTATGKLLII). The Cytoplasmic segment spans residues 47–54 (VLSWIDQR). The helical transmembrane segment at 55–75 (LHIQMYFFLRNFSFLELLLVT) threads the bilayer. The Extracellular segment spans residues 76–99 (VVVPKMLVVILTGDHTISFVSCII). An intrachain disulfide couples C97 to C189. The helical transmembrane segment at 100–120 (QSYLYFFLGTTDFFLLAVMSL) threads the bilayer. Over 121 to 139 (DRYLAICRPLRYETLMNGH) the chain is Cytoplasmic. Residues 140–160 (VCSQLVLASWLAGFLWVLCPT) form a helical membrane-spanning segment. The Extracellular segment spans residues 161 to 197 (VLMASLPFCGPNGIDHFFRDSWPLLRLSCGDTHLLKL). The helical transmembrane segment at 198–217 (VAFMLSTLVLLGSLALTSVS) threads the bilayer. Over 218-237 (YACILATVLRAPTAAERRKA) the chain is Cytoplasmic. The chain crosses the membrane as a helical span at residues 238 to 258 (FSTCASHLTVVVIIYGSSIFL). Topologically, residues 259-271 (YIRMSEAQSKLLN) are extracellular. Residues 272 to 292 (KGASVLSCIITPLLNPFIFTL) traverse the membrane as a helical segment. The Cytoplasmic segment spans residues 293–323 (RNDKVQQALREALGWPRLTAVMKLRVTSQRK).

Belongs to the G-protein coupled receptor 1 family.

The protein localises to the cell membrane. Its function is as follows. Odorant receptor. The polypeptide is Olfactory receptor 6T1 (OR6T1) (Homo sapiens (Human)).